The chain runs to 88 residues: Large ribosomal subunit protein bL31B (88 aa).

Belongs to the bacterial ribosomal protein bL31 family. Type B subfamily. In terms of assembly, part of the 50S ribosomal subunit.

The protein is Large ribosomal subunit protein bL31B of Janthinobacterium sp. (strain Marseille) (Minibacterium massiliensis).